The chain runs to 94 residues: uncharacterized protein (94 aa).

The protein to M.tuberculosis Rv2632c.

This is an uncharacterized protein from Mycobacterium tuberculosis (strain CDC 1551 / Oshkosh).